Consider the following 287-residue polypeptide: Thymidylate synthase (287 aa).

R21 serves as a coordination point for dUMP. A (6R)-5,10-methylene-5,6,7,8-tetrahydrofolate-binding site is contributed by N51. DUMP is bound at residue 150–151 (RR). Catalysis depends on C170, which acts as the Nucleophile. DUMP is bound by residues 190–193 (RSGD), N201, and 231–233 (HIY). Residue D193 coordinates (6R)-5,10-methylene-5,6,7,8-tetrahydrofolate. A286 is a (6R)-5,10-methylene-5,6,7,8-tetrahydrofolate binding site.

It belongs to the thymidylate synthase family. Bacterial-type ThyA subfamily. Homodimer.

Its subcellular location is the cytoplasm. The enzyme catalyses dUMP + (6R)-5,10-methylene-5,6,7,8-tetrahydrofolate = 7,8-dihydrofolate + dTMP. It participates in pyrimidine metabolism; dTTP biosynthesis. Functionally, catalyzes the reductive methylation of 2'-deoxyuridine-5'-monophosphate (dUMP) to 2'-deoxythymidine-5'-monophosphate (dTMP) while utilizing 5,10-methylenetetrahydrofolate (mTHF) as the methyl donor and reductant in the reaction, yielding dihydrofolate (DHF) as a by-product. This enzymatic reaction provides an intracellular de novo source of dTMP, an essential precursor for DNA biosynthesis. The chain is Thymidylate synthase from Mycoplasma genitalium (strain ATCC 33530 / DSM 19775 / NCTC 10195 / G37) (Mycoplasmoides genitalium).